A 364-amino-acid chain; its full sequence is tRNA-specific 2-thiouridylase MnmA (364 aa).

ATP is bound by residues 12–19 (GISGGVDS) and methionine 38. The interval 98-100 (NPD) is interaction with target base in tRNA. Cysteine 103 (nucleophile) is an active-site residue. Cysteine 103 and cysteine 199 are joined by a disulfide. ATP is bound at residue glycine 127. The interval 149 to 151 (KEQ) is interaction with tRNA. The active-site Cysteine persulfide intermediate is cysteine 199. Residues 311-312 (RY) are interaction with tRNA.

The protein belongs to the MnmA/TRMU family.

It localises to the cytoplasm. The enzyme catalyses S-sulfanyl-L-cysteinyl-[protein] + uridine(34) in tRNA + AH2 + ATP = 2-thiouridine(34) in tRNA + L-cysteinyl-[protein] + A + AMP + diphosphate + H(+). In terms of biological role, catalyzes the 2-thiolation of uridine at the wobble position (U34) of tRNA, leading to the formation of s(2)U34. This chain is tRNA-specific 2-thiouridylase MnmA, found in Hahella chejuensis (strain KCTC 2396).